A 311-amino-acid chain; its full sequence is 4-hydroxy-tetrahydrodipicolinate synthase (311 aa).

T49 is a binding site for pyruvate. Y138 acts as the Proton donor/acceptor in catalysis. K166 acts as the Schiff-base intermediate with substrate in catalysis. Residue I207 coordinates pyruvate.

The protein belongs to the DapA family. As to quaternary structure, homotetramer; dimer of dimers.

The protein localises to the cytoplasm. The enzyme catalyses L-aspartate 4-semialdehyde + pyruvate = (2S,4S)-4-hydroxy-2,3,4,5-tetrahydrodipicolinate + H2O + H(+). The protein operates within amino-acid biosynthesis; L-lysine biosynthesis via DAP pathway; (S)-tetrahydrodipicolinate from L-aspartate: step 3/4. Catalyzes the condensation of (S)-aspartate-beta-semialdehyde [(S)-ASA] and pyruvate to 4-hydroxy-tetrahydrodipicolinate (HTPA). The polypeptide is 4-hydroxy-tetrahydrodipicolinate synthase (Limosilactobacillus fermentum (strain NBRC 3956 / LMG 18251) (Lactobacillus fermentum)).